Consider the following 380-residue polypeptide: Alcohol dehydrogenase-like 4 (380 aa).

Zn(2+) contacts are provided by Cys47, Thr49, His70, Cys100, Cys103, Cys106, Cys114, and Cys180. 2 residues coordinate an alcohol: Thr49 and His70. Thr49 contacts NAD(+). Residues 205-210 (GLGAVG), Asp229, Lys234, 298-300 (LGV), Phe325, and Arg375 each bind NAD(+).

The protein belongs to the zinc-containing alcohol dehydrogenase family. Class-III subfamily. Homodimer. Requires Zn(2+) as cofactor.

The protein localises to the cytoplasm. It carries out the reaction a primary alcohol + NAD(+) = an aldehyde + NADH + H(+). The enzyme catalyses a secondary alcohol + NAD(+) = a ketone + NADH + H(+). The sequence is that of Alcohol dehydrogenase-like 4 from Arabidopsis thaliana (Mouse-ear cress).